The primary structure comprises 696 residues: UvrABC system protein C (696 aa).

Positions 16-95 (TEPGVYKFRD…IKRFDPRFNV (80 aa)) constitute a GIY-YIG domain. Residues 208–243 (DKVTRKLNADMMAAAEELDFERAARLRDDLEAIDKV) enclose the UVR domain.

This sequence belongs to the UvrC family. In terms of assembly, interacts with UvrB in an incision complex.

It is found in the cytoplasm. Functionally, the UvrABC repair system catalyzes the recognition and processing of DNA lesions. UvrC both incises the 5' and 3' sides of the lesion. The N-terminal half is responsible for the 3' incision and the C-terminal half is responsible for the 5' incision. The sequence is that of UvrABC system protein C from Corynebacterium glutamicum (strain ATCC 13032 / DSM 20300 / JCM 1318 / BCRC 11384 / CCUG 27702 / LMG 3730 / NBRC 12168 / NCIMB 10025 / NRRL B-2784 / 534).